The sequence spans 640 residues: Replication protein A 70 kDa DNA-binding subunit A (640 aa).

A DNA-binding region (OB) is located at residues 211–293 (AIKARVTAKG…NHLKNEWEIF (83 aa)). The segment at 503–529 (CPLMIGDKQCNKKVTRSGTNRWLCDRC) adopts a C4-type zinc-finger fold.

Belongs to the replication factor A protein 1 family. In terms of assembly, heterotrimer of RPA1, RPA2 and RPA3 (canonical replication protein A complex). Interacts with RPA2A. As to expression, expressed in roots, leaves, stalks and flower buds.

The protein localises to the nucleus. Component of the replication protein A complex (RPA) required for DNA recombination, repair and replication. The activity of RPA is mediated by single-stranded DNA binding and protein interactions. Plays an essential role at later stages of meiotic recombination events required for the formation of class I crossovers. Is essential for normal progression through meiosis in pollen mother cells. Is involved in repair of double-strand DNA breaks (DSBs) induced by genotoxic stresses, but does not seem to be required for the repair of meiotic DSBs. The chain is Replication protein A 70 kDa DNA-binding subunit A (RPA1A) from Arabidopsis thaliana (Mouse-ear cress).